The following is a 210-amino-acid chain: Chaperone protein TorD (210 aa).

It belongs to the TorD/DmsD family. TorD subfamily.

The protein localises to the cytoplasm. Involved in the biogenesis of TorA. Acts on TorA before the insertion of the molybdenum cofactor and, as a result, probably favors a conformation of the apoenzyme that is competent for acquiring the cofactor. The sequence is that of Chaperone protein TorD from Salmonella arizonae (strain ATCC BAA-731 / CDC346-86 / RSK2980).